The chain runs to 198 residues: Recombination protein RecR (198 aa).

The C4-type zinc finger occupies 57–72; the sequence is CSLCGNLDTVDPCHIC. In terms of domain architecture, Toprim spans 80–175; sequence GLICVVETVG…TVTRVGHGVP (96 aa).

This sequence belongs to the RecR family.

Functionally, may play a role in DNA repair. It seems to be involved in an RecBC-independent recombinational process of DNA repair. It may act with RecF and RecO. The polypeptide is Recombination protein RecR (Gluconobacter oxydans (strain 621H) (Gluconobacter suboxydans)).